The chain runs to 37 residues: MKVRASVKKICRNCKIIKRNGVVRVICTDAKHKQRQG.

This sequence belongs to the bacterial ribosomal protein bL36 family.

In Idiomarina loihiensis (strain ATCC BAA-735 / DSM 15497 / L2-TR), this protein is Large ribosomal subunit protein bL36.